A 921-amino-acid chain; its full sequence is Translation initiation factor IF-2 (921 aa).

Disordered regions lie at residues 81-118 (AVAE…AAAP), 175-194 (PVVE…ANQA), and 219-301 (VAPA…KKHE). Residues 96-112 (PAAPTPPEVPAAAPAPP) show a composition bias toward pro residues. The span at 229 to 241 (RPSPAAGAPSRGA) shows a compositional bias: low complexity. A compositionally biased stretch (basic and acidic residues) spans 292–301 (KKKEQPKKHE). Residues 421-590 (KRPPVVTIMG…LLQADLMELK (170 aa)) enclose the tr-type G domain. Residues 430-437 (GHVDHGKT) form a G1 region. 430-437 (GHVDHGKT) provides a ligand contact to GTP. Residues 455–459 (GITQH) form a G2 region. The interval 476–479 (DTPG) is G3. Residues 476–480 (DTPGH) and 530–533 (NKID) each bind GTP. Residues 530–533 (NKID) form a G4 region. The G5 stretch occupies residues 566–568 (SAK).

This sequence belongs to the TRAFAC class translation factor GTPase superfamily. Classic translation factor GTPase family. IF-2 subfamily.

Its subcellular location is the cytoplasm. In terms of biological role, one of the essential components for the initiation of protein synthesis. Protects formylmethionyl-tRNA from spontaneous hydrolysis and promotes its binding to the 30S ribosomal subunits. Also involved in the hydrolysis of GTP during the formation of the 70S ribosomal complex. The polypeptide is Translation initiation factor IF-2 (Pelobacter propionicus (strain DSM 2379 / NBRC 103807 / OttBd1)).